We begin with the raw amino-acid sequence, 465 residues long: uncharacterized protein (465 aa).

3 disordered regions span residues serine 95 to proline 173, glutamine 407 to lysine 426, and alanine 443 to lysine 465. Residues lysine 118–serine 137 are compositionally biased toward basic residues. Low complexity predominate over residues serine 138–lysine 150. Residues threonine 153–proline 173 show a composition bias toward basic and acidic residues. Residues methionine 451–lysine 465 are compositionally biased toward basic residues.

This is an uncharacterized protein from Caenorhabditis elegans.